Consider the following 345-residue polypeptide: S-adenosylmethionine:tRNA ribosyltransferase-isomerase (345 aa).

Belongs to the QueA family. In terms of assembly, monomer.

The protein resides in the cytoplasm. The catalysed reaction is 7-aminomethyl-7-carbaguanosine(34) in tRNA + S-adenosyl-L-methionine = epoxyqueuosine(34) in tRNA + adenine + L-methionine + 2 H(+). It functions in the pathway tRNA modification; tRNA-queuosine biosynthesis. Transfers and isomerizes the ribose moiety from AdoMet to the 7-aminomethyl group of 7-deazaguanine (preQ1-tRNA) to give epoxyqueuosine (oQ-tRNA). The sequence is that of S-adenosylmethionine:tRNA ribosyltransferase-isomerase from Anaeromyxobacter sp. (strain Fw109-5).